A 387-amino-acid polypeptide reads, in one-letter code: Dual-specificity RNA methyltransferase RlmN (387 aa).

Glutamate 93 (proton acceptor) is an active-site residue. Residues 99 to 343 form the Radical SAM core domain; the sequence is EENRGTLCIS…TTVRKTRGDD (245 aa). A disulfide bridge links cysteine 106 with cysteine 348. [4Fe-4S] cluster is bound by residues cysteine 113, cysteine 117, and cysteine 120. S-adenosyl-L-methionine contacts are provided by residues 172–173, serine 204, 226–228, and asparagine 305; these read GE and SLH. The active-site S-methylcysteine intermediate is cysteine 348.

Belongs to the radical SAM superfamily. RlmN family. The cofactor is [4Fe-4S] cluster.

The protein localises to the cytoplasm. It carries out the reaction adenosine(2503) in 23S rRNA + 2 reduced [2Fe-2S]-[ferredoxin] + 2 S-adenosyl-L-methionine = 2-methyladenosine(2503) in 23S rRNA + 5'-deoxyadenosine + L-methionine + 2 oxidized [2Fe-2S]-[ferredoxin] + S-adenosyl-L-homocysteine. The catalysed reaction is adenosine(37) in tRNA + 2 reduced [2Fe-2S]-[ferredoxin] + 2 S-adenosyl-L-methionine = 2-methyladenosine(37) in tRNA + 5'-deoxyadenosine + L-methionine + 2 oxidized [2Fe-2S]-[ferredoxin] + S-adenosyl-L-homocysteine. Functionally, specifically methylates position 2 of adenine 2503 in 23S rRNA and position 2 of adenine 37 in tRNAs. m2A2503 modification seems to play a crucial role in the proofreading step occurring at the peptidyl transferase center and thus would serve to optimize ribosomal fidelity. The protein is Dual-specificity RNA methyltransferase RlmN of Janthinobacterium sp. (strain Marseille) (Minibacterium massiliensis).